A 151-amino-acid chain; its full sequence is Ribonuclease H (151 aa).

The RNase H type-1 domain occupies 1–141; the sequence is MKHVDIFTDG…ADELARRGME (141 aa). Mg(2+) is bound by residues aspartate 9, glutamate 47, aspartate 69, and aspartate 133.

Belongs to the RNase H family. In terms of assembly, monomer. It depends on Mg(2+) as a cofactor.

The protein resides in the cytoplasm. The catalysed reaction is Endonucleolytic cleavage to 5'-phosphomonoester.. Endonuclease that specifically degrades the RNA of RNA-DNA hybrids. This Rhizobium etli (strain ATCC 51251 / DSM 11541 / JCM 21823 / NBRC 15573 / CFN 42) protein is Ribonuclease H.